The primary structure comprises 722 residues: Polyribonucleotide nucleotidyltransferase (722 aa).

Residues Asp-505 and Asp-511 each contribute to the Mg(2+) site. The 60-residue stretch at 572–631 folds into the KH domain; it reads PSITTIKIHPDKIRDVIGKGGATIRGICDETGASIDLDDDGNVKIYADNAAAAQAAVNRV. The 69-residue stretch at 641 to 709 folds into the S1 motif domain; the sequence is GAIYKGRVER…NRGRVKLSMK (69 aa).

This sequence belongs to the polyribonucleotide nucleotidyltransferase family. As to quaternary structure, component of the RNA degradosome, which is a multiprotein complex involved in RNA processing and mRNA degradation. Mg(2+) serves as cofactor.

It localises to the cytoplasm. It catalyses the reaction RNA(n+1) + phosphate = RNA(n) + a ribonucleoside 5'-diphosphate. Involved in mRNA degradation. Catalyzes the phosphorolysis of single-stranded polyribonucleotides processively in the 3'- to 5'-direction. This is Polyribonucleotide nucleotidyltransferase from Marinobacter nauticus (strain ATCC 700491 / DSM 11845 / VT8) (Marinobacter aquaeolei).